The primary structure comprises 427 residues: 11-beta-hydroxysteroid dehydrogenase type 2 (427 aa).

82–111 (TRAVLITGCDSGFGNATAKKLDAMGFTVLA) provides a ligand contact to NAD(+). Residue Ser219 participates in substrate binding. Tyr232 functions as the Proton acceptor in the catalytic mechanism.

It belongs to the short-chain dehydrogenases/reductases (SDR) family. As to quaternary structure, interacts with ligand-free cytoplasmic NR3C2. In terms of tissue distribution, highly expressed in the kidney and adrenal and at lower levels in the colon.

It is found in the microsome. It localises to the endoplasmic reticulum. The enzyme catalyses an 11beta-hydroxysteroid + NAD(+) = an 11-oxosteroid + NADH + H(+). The catalysed reaction is corticosterone + NAD(+) = 11-dehydrocorticosterone + NADH + H(+). It catalyses the reaction cortisol + NAD(+) = cortisone + NADH + H(+). It carries out the reaction 11beta,17beta-dihydroxyandrost-4-ene-3-one + NAD(+) = 17beta-hydroxyandrost-4-ene-3,11-dione + NADH + H(+). The enzyme catalyses 11beta-hydroxyandrost-4-ene-3,17-dione + NAD(+) = androst-4-ene-3,11,17-trione + NADH + H(+). Its pathway is steroid metabolism. Its activity is regulated as follows. Inhibited by glycyrrhetinic acid, carbenoloxone, 11-alpha-OH-progesterone and 11-beta-OH-progesterone. Its function is as follows. Catalyzes the conversion of biologically active 11beta-hydroxyglucocorticoids (11beta-hydroxysteroid) such as cortisol, to inactive 11-ketoglucocorticoids (11-oxosteroid) such as cortisone, in the presence of NAD(+). Functions as a dehydrogenase (oxidase), thereby decreasing the concentration of active glucocorticoids, thus protecting the nonselective mineralocorticoid receptor from occupation by glucocorticoids. Plays an important role in maintaining glucocorticoids balance during preimplantation and protects the fetus from excessive maternal corticosterone exposure. Catalyzes the oxidation of 11beta-hydroxytestosterone (11beta,17beta-dihydroxyandrost-4-ene-3-one) to 11-ketotestosterone (17beta-hydroxyandrost-4-ene-3,11-dione), a major bioactive androgen. Catalyzes the conversion of 11beta-hydroxyandrostenedione (11beta-hydroxyandrost-4-ene-3,17-dione) to 11-ketoandrostenedione (androst-4-ene-3,11,17-trione), which can be further metabolized to 11-ketotestosterone. Converts 7-beta-25-dihydroxycholesterol to 7-oxo-25-hydroxycholesterol in vitro. 7-beta-25-dihydroxycholesterol (not 7-oxo-25-hydroxycholesterol) acts as a ligand for the G-protein-coupled receptor (GPCR) Epstein-Barr virus-induced gene 2 (EBI2) and may thereby regulate immune cell migration. May protect ovulating oocytes and fertilizing spermatozoa from the adverse effects of cortisol. The protein is 11-beta-hydroxysteroid dehydrogenase type 2 (HSD11B2) of Ovis aries (Sheep).